The chain runs to 553 residues: CTP synthase (553 aa).

Positions 1 to 270 (MTKYVFVTGG…DELICEELKL (270 aa)) are amidoligase domain. Position 13 (Ser-13) interacts with CTP. Ser-13 contributes to the UTP binding site. Residues 14–19 (SLGKGI) and Asp-71 contribute to the ATP site. The Mg(2+) site is built by Asp-71 and Glu-144. CTP-binding positions include 151–153 (DIE), 191–196 (KTKPTQ), and Lys-227. Residues 191–196 (KTKPTQ) and Lys-227 each bind UTP. The region spanning 295–547 (TIGMVGKYVE…VEAARAHHEA (253 aa)) is the Glutamine amidotransferase type-1 domain. An L-glutamine-binding site is contributed by Gly-356. Residue Cys-383 is the Nucleophile; for glutamine hydrolysis of the active site. Residues 384–387 (LGMQ), Glu-407, and Arg-473 each bind L-glutamine. Catalysis depends on residues His-520 and Glu-522.

This sequence belongs to the CTP synthase family. In terms of assembly, homotetramer.

It catalyses the reaction UTP + L-glutamine + ATP + H2O = CTP + L-glutamate + ADP + phosphate + 2 H(+). The enzyme catalyses L-glutamine + H2O = L-glutamate + NH4(+). The catalysed reaction is UTP + NH4(+) + ATP = CTP + ADP + phosphate + 2 H(+). The protein operates within pyrimidine metabolism; CTP biosynthesis via de novo pathway; CTP from UDP: step 2/2. With respect to regulation, allosterically activated by GTP, when glutamine is the substrate; GTP has no effect on the reaction when ammonia is the substrate. The allosteric effector GTP functions by stabilizing the protein conformation that binds the tetrahedral intermediate(s) formed during glutamine hydrolysis. Inhibited by the product CTP, via allosteric rather than competitive inhibition. In terms of biological role, catalyzes the ATP-dependent amination of UTP to CTP with either L-glutamine or ammonia as the source of nitrogen. Regulates intracellular CTP levels through interactions with the four ribonucleotide triphosphates. This chain is CTP synthase, found in Paraburkholderia phymatum (strain DSM 17167 / CIP 108236 / LMG 21445 / STM815) (Burkholderia phymatum).